A 406-amino-acid polypeptide reads, in one-letter code: UPF0754 membrane protein CYA_0973 (406 aa).

2 helical membrane-spanning segments follow: residues 1-21 (MALW…YFTN) and 385-405 (IVNL…LFLL).

Belongs to the UPF0754 family.

The protein resides in the cell inner membrane. The chain is UPF0754 membrane protein CYA_0973 from Synechococcus sp. (strain JA-3-3Ab) (Cyanobacteria bacterium Yellowstone A-Prime).